Reading from the N-terminus, the 407-residue chain is Phosphopentomutase (407 aa).

D10, D306, H311, D347, H348, and H359 together coordinate Mn(2+).

This sequence belongs to the phosphopentomutase family. Mn(2+) is required as a cofactor.

Its subcellular location is the cytoplasm. It carries out the reaction 2-deoxy-alpha-D-ribose 1-phosphate = 2-deoxy-D-ribose 5-phosphate. The enzyme catalyses alpha-D-ribose 1-phosphate = D-ribose 5-phosphate. The protein operates within carbohydrate degradation; 2-deoxy-D-ribose 1-phosphate degradation; D-glyceraldehyde 3-phosphate and acetaldehyde from 2-deoxy-alpha-D-ribose 1-phosphate: step 1/2. Functionally, isomerase that catalyzes the conversion of deoxy-ribose 1-phosphate (dRib-1-P) and ribose 1-phosphate (Rib-1-P) to deoxy-ribose 5-phosphate (dRib-5-P) and ribose 5-phosphate (Rib-5-P), respectively. The polypeptide is Phosphopentomutase (Escherichia coli (strain UTI89 / UPEC)).